Here is a 279-residue protein sequence, read N- to C-terminus: Acyl-[acyl-carrier-protein]--UDP-N-acetylglucosamine O-acyltransferase (279 aa).

This sequence belongs to the transferase hexapeptide repeat family. LpxA subfamily. As to quaternary structure, homotrimer.

It localises to the cytoplasm. It carries out the reaction a (3R)-hydroxyacyl-[ACP] + UDP-N-acetyl-alpha-D-glucosamine = a UDP-3-O-[(3R)-3-hydroxyacyl]-N-acetyl-alpha-D-glucosamine + holo-[ACP]. Its pathway is glycolipid biosynthesis; lipid IV(A) biosynthesis; lipid IV(A) from (3R)-3-hydroxytetradecanoyl-[acyl-carrier-protein] and UDP-N-acetyl-alpha-D-glucosamine: step 1/6. Functionally, involved in the biosynthesis of lipid A, a phosphorylated glycolipid that anchors the lipopolysaccharide to the outer membrane of the cell. The chain is Acyl-[acyl-carrier-protein]--UDP-N-acetylglucosamine O-acyltransferase from Mesorhizobium japonicum (strain LMG 29417 / CECT 9101 / MAFF 303099) (Mesorhizobium loti (strain MAFF 303099)).